A 766-amino-acid chain; its full sequence is MGSFLKSFRKDVGSAAPSVGAPPAKKEPQPLPMTPLEKMLTELGPIRGDGSDKFYGMENFGNTCYCNSILQCLYYSVPFREAVLNYPKRTPIEDLEAALAKALRYQDPNARLEAEALAEKQKAANSPRPGQPPNPQQKPEDKDSPEYKKKLALQTLPLLETTDNSVSYGIPESLFSSLKDMFESIVGSQSRIGIIRPQHFLEVLRRENEMFRTAMHQDAHEFLNLLLNEVVVDVEKAAAKLLESPQPASDVSDSVIPSSSSGSRTPNTTRWVHELFEGLLTSETQCLTCEKASQRDEVFLDLSVDLEQHSSVTSCLRKFSAEEMLCERNKFHCDNCGGLQEAEKRMKIKRLPRILALHLKRFKYTEDLQRLQKLFHRVVYPYHLRLFNTTDDAEDPDRLYELYAVVVHIGGGPYHGHYVSIIKTQDRGWLLFDDEMVEPVDKNYVRNFFGDKPGLACAYVLFYQETTMEAVMKEQEQENTEPPVEVNASTLKQNGFSSSATLAHAHSASQVPTYEDHDRFTGLKRAPTAPQLSTHPEHTTTDSESLPSPAPDPAPLTSLPPIPPIPETPPAPLTSRKSDLQSKKERVKEEKERKAAEKEKEKQRRKEIETRLKDRQRREDDDLKAALEASKVSKEDEDRRNHAENGTSKKNAGGLGRFRSLSQRLSTKESRTSLSRIPPLPNGNHTLSKVPDESEQTHPKSPTPPAPLSRPASQPLNDDLLGSPRADTLAVPTEQEHIKNSKHDRSSHGKWRSFSLRKKSFNILSS.

Residues 1-32 (MGSFLKSFRKDVGSAAPSVGAPPAKKEPQPLP) form a disordered region. Residues 13–23 (GSAAPSVGAPP) are compositionally biased toward low complexity. A USP domain is found at 55-466 (YGMENFGNTC…CAYVLFYQET (412 aa)). The active-site Nucleophile is Cys-64. 2 disordered regions span residues 115–145 (EALAEKQKAANSPRPGQPPNPQQKPEDKDSP) and 243–266 (ESPQPASDVSDSVIPSSSSGSRTP). The span at 249 to 263 (SDVSDSVIPSSSSGS) shows a compositional bias: low complexity. His-417 acts as the Proton acceptor in catalysis. Positions 526–752 (APTAPQLSTH…HDRSSHGKWR (227 aa)) are disordered. A compositionally biased stretch (pro residues) spans 548 to 572 (SPAPDPAPLTSLPPIPPIPETPPAP). The stretch at 573–620 (LTSRKSDLQSKKERVKEEKERKAAEKEKEKQRRKEIETRLKDRQRRED) forms a coiled coil. 2 stretches are compositionally biased toward basic and acidic residues: residues 576 to 643 (RKSD…RNHA) and 734 to 747 (EQEHIKNSKHDRSS).

This sequence belongs to the peptidase C19 family. Interacts with creA, creC and qutD.

The catalysed reaction is Thiol-dependent hydrolysis of ester, thioester, amide, peptide and isopeptide bonds formed by the C-terminal Gly of ubiquitin (a 76-residue protein attached to proteins as an intracellular targeting signal).. In terms of biological role, ubiquitin thioesterase component of the regulatory network controlling carbon source utilization through ubiquitination and deubiquitination involving creA, creB, creC, creD and acrB. Deubiquitinates the creA catabolic repressor and the quinate permease qutD. Also plays a role in response to carbon starvation and the control of extracellular proteases activity. The chain is Ubiquitin carboxyl-terminal hydrolase creB (creB) from Emericella nidulans (strain FGSC A4 / ATCC 38163 / CBS 112.46 / NRRL 194 / M139) (Aspergillus nidulans).